Here is a 299-residue protein sequence, read N- to C-terminus: Kynurenine formamidase-like hydrolase fscH (299 aa).

Residues 48–52 (HGGAW) carry the HGGXW motif. The tract at residues 90-110 (SPRTPSQPVPSGGHVGGEQQA) is disordered. The active-site Nucleophile is S142.

Belongs to the kynurenine formamidase family.

Its pathway is secondary metabolite biosynthesis. Kynurenine formamidase-like hydrolase; part of the fragmented gene cluster that mediates the biosynthesis of fusarochromene, a tryptophan-derived metabolite closely related to a group of mycotoxins including fusarochromanone. Within the pathway, fscH converts the product of fscD into 4-hydroxykyrunenine. The first step of the pathway is the epimerization of L-tryptophan to D-tryptophan in the presence of the NRPS-like tryptophan epimerase fscC. D-tryptophan is subsequently hydroxylated by the tryptophan 6-hydroxylase fscE to yield 6-hydroxytryptophan. The pyrrole ring undergoes cleavaged by the tryptophan 2,3-dioxygenase fscD and is finally converted to 4-hydroxykyrunenine by the hydrolase fscH. The NRPS-like oxidoreductase fscA reduces the carboxyl group to primary alcohol and the DMATS-type prenyltransferase fscG performs prenylation, followed by the formation of a chromene ring catalyzed by the oxidoreductase fscI, which leads to desacetylfusarochromene. Epoxidation by fscF and rearrangement reactions of chromene double bonds convert compound desacetylfusarochromene to fusarochromanones. Although specific acetyltransferases were not found near the fsc gene cluster, several predicted enzymes containing the N-acetyltransferase superfamily domain are present in the genome of F.equiseti. These predicted enzymes may have the potential to convert desacetylfusarochromene to fusarochromene. This chain is Kynurenine formamidase-like hydrolase fscH, found in Fusarium equiseti (Fusarium scirpi).